Consider the following 75-residue polypeptide: Mating pheromone Er-1/Er-3 (75 aa).

The first 19 residues, 1–19 (MNKLAILAIIAMVLFSANA), serve as a signal peptide directing secretion. The propeptide occupies 20–35 (FRFQSRLRSNVEAKTG). 3 disulfide bridges follow: cysteine 38–cysteine 54, cysteine 45–cysteine 71, and cysteine 50–cysteine 63.

As to quaternary structure, homodimer.

Its subcellular location is the secreted. It is found in the cell membrane. Functionally, mating ciliate pheromones (or gamones) are diffusible extracellular communication signals that distinguish different intraspecific classes of cells commonly referred to as 'mating types'. They prepare the latter for conjugation by changing their cell surface properties. The membrane-bound form promotes inter-cellular communication and adhesion for mating pair formation and may act as binding site for the secreted form. The sequence is that of Mating pheromone Er-1/Er-3 (MAT1) from Euplotes raikovi.